We begin with the raw amino-acid sequence, 358 residues long: Tribbles homolog 3 (358 aa).

Positions Met-1 to Thr-54 are disordered. Residues Met-1 to Leu-127 form an interaction with DDIT3/CHOP region. Ser-12 carries the phosphoserine modification. Positions Pro-41–Thr-54 are enriched in pro residues. The Protein kinase domain occupies Leu-68–Arg-316.

Belongs to the protein kinase superfamily. CAMK Ser/Thr protein kinase family. Tribbles subfamily. As to quaternary structure, interacts with AKT1, AKT2, MAP2K1 and MAP2K7. Interacts with ATF4. Interacts with DDIT3/CHOP and inhibits its interaction with EP300/P300. Interacts with APOBEC3C. Interacts (via N-terminus) with APOBEC3A. Interacts with RELA. Highest expression in liver, pancreas, peripheral blood leukocytes and bone marrow. Also highly expressed in a number of primary lung, colon and breast tumors. Expressed in spleen, thymus, and prostate and is undetectable in other examined tissues, including testis, ovary, small intestine, colon, leukocyte, heart, brain, placenta, lung, skeletal muscle, and kidney.

It localises to the nucleus. Its function is as follows. Inactive protein kinase which acts as a regulator of the integrated stress response (ISR), a process for adaptation to various stress. Inhibits the transcriptional activity of DDIT3/CHOP and is involved in DDIT3/CHOP-dependent cell death during ER stress. May play a role in programmed neuronal cell death but does not appear to affect non-neuronal cells. Acts as a negative feedback regulator of the ATF4-dependent transcription during the ISR: while TRIB3 expression is promoted by ATF4, TRIB3 protein interacts with ATF4 and inhibits ATF4 transcription activity. Disrupts insulin signaling by binding directly to Akt kinases and blocking their activation. May bind directly to and mask the 'Thr-308' phosphorylation site in AKT1. Interacts with the NF-kappa-B transactivator p65 RELA and inhibits its phosphorylation and thus its transcriptional activation activity. Interacts with MAPK kinases and regulates activation of MAP kinases. Can inhibit APOBEC3A editing of nuclear DNA. This is Tribbles homolog 3 (TRIB3) from Homo sapiens (Human).